Here is a 424-residue protein sequence, read N- to C-terminus: Serine--tRNA ligase (424 aa).

231–233 provides a ligand contact to L-serine; the sequence is TAE. 262 to 264 is an ATP binding site; sequence RSE. Glutamate 285 serves as a coordination point for L-serine. 349-352 is a binding site for ATP; the sequence is EISS. Serine 385 lines the L-serine pocket.

This sequence belongs to the class-II aminoacyl-tRNA synthetase family. Type-1 seryl-tRNA synthetase subfamily. As to quaternary structure, homodimer. The tRNA molecule binds across the dimer.

The protein resides in the cytoplasm. The enzyme catalyses tRNA(Ser) + L-serine + ATP = L-seryl-tRNA(Ser) + AMP + diphosphate + H(+). It catalyses the reaction tRNA(Sec) + L-serine + ATP = L-seryl-tRNA(Sec) + AMP + diphosphate + H(+). Its pathway is aminoacyl-tRNA biosynthesis; selenocysteinyl-tRNA(Sec) biosynthesis; L-seryl-tRNA(Sec) from L-serine and tRNA(Sec): step 1/1. Its function is as follows. Catalyzes the attachment of serine to tRNA(Ser). Is also able to aminoacylate tRNA(Sec) with serine, to form the misacylated tRNA L-seryl-tRNA(Sec), which will be further converted into selenocysteinyl-tRNA(Sec). This Marinobacter nauticus (strain ATCC 700491 / DSM 11845 / VT8) (Marinobacter aquaeolei) protein is Serine--tRNA ligase.